Here is a 73-residue protein sequence, read N- to C-terminus: YFSYNDKIIKILEAEYLNADHHCTSGTVISDKLEIACGSGILRVKKLQQESKKALNIEEFLRGTNILKDTVLK.

It belongs to the Fmt family.

It carries out the reaction L-methionyl-tRNA(fMet) + (6R)-10-formyltetrahydrofolate = N-formyl-L-methionyl-tRNA(fMet) + (6S)-5,6,7,8-tetrahydrofolate + H(+). In terms of biological role, attaches a formyl group to the free amino group of methionyl-tRNA(fMet). The formyl group appears to play a dual role in the initiator identity of N-formylmethionyl-tRNA by promoting its recognition by IF2 and preventing the misappropriation of this tRNA by the elongation apparatus. The sequence is that of Methionyl-tRNA formyltransferase (fmt) from Rickettsia sibirica.